The chain runs to 288 residues: uncharacterized protein (288 aa).

A compositionally biased stretch (basic and acidic residues) spans 1-12; the sequence is MTEGRCAQHPDG. The disordered stretch occupies residues 1–20; it reads MTEGRCAQHPDGLDVQDVCD.

Belongs to the class IV-like SAM-binding methyltransferase superfamily. RNA methyltransferase TrmH family.

This is an uncharacterized protein from Mycobacterium bovis (strain ATCC BAA-935 / AF2122/97).